The chain runs to 223 residues: Alpha-S2-casein (223 aa).

A signal peptide spans 1–15 (MKFFIFTCLLAVALA). Phosphoserine is present on residues S23, S24, S25, S72, S73, S74, S77, S145, S147, S151, and S159. The segment at residues 77 to 141 (SAEVAPEEVK…AGPFTPTVNR (65 aa)) is a repeat. The stretch at residues 159 to 223 (STEVFTKKTK…TNAIPYVRYL (65 aa)) is a repeat.

Belongs to the alpha-casein family. As to expression, mammary gland specific. Secreted in milk.

The protein resides in the secreted. Important role in the capacity of milk to transport calcium phosphate. The polypeptide is Alpha-S2-casein (CSN1S2) (Ovis aries (Sheep)).